The chain runs to 197 residues: MFIGMKSSSQLRQEALEYTYNANTPLKIYLKVCVSILDKAQLEFQKGDIFSAYVLYYRYADLIANKLSDHSELALVAERDQTVLHREEYYQLVKLELPAVLKIVEDLQKNIDLDYNKIQLSLSKNIAKQQKKPNHVSEPVLLPKTFNENRFNQSISFFNNMNSNITLENKMHGNNNNNTHQELLYPELPTLSNASYI.

The protein belongs to the RFU1 family.

It localises to the endosome. Inhibitor of the DOA4 deubiquitinase involved in the regulation of protein degradation by the proteasome and maintenance of a normal level of free ubiquitin. This is Regulator of free ubiquitin chains 1 (RFU1) from Vanderwaltozyma polyspora (strain ATCC 22028 / DSM 70294 / BCRC 21397 / CBS 2163 / NBRC 10782 / NRRL Y-8283 / UCD 57-17) (Kluyveromyces polysporus).